The primary structure comprises 354 residues: MAELKNDRYLRALLKEPVDVTPVWMMRQAGRYLPEYKATRAQAGDFMSLCKNHELACEVTLQPLRRYDLDAAILFSDILTVPDAMGLGLYFEAGEGPRFERPTDTIDAIKKLSIPDPEDELGYVMKAVSTIRRELNGAVPLIGFSGSPWTLATYMVEGGSSKTFEKIKKMAYAEPMALHMLLDKLADSVILYLNAQVANGAQSLMIFDSWGGALSHSAYREFSLHYMQKIIDGLTRFADGRKVPVTLFTKGGGLWLEAMAETGCDALGLDWTVDIADARRRVGHKVALQGNMDPSMLYAPIPRIEEEVGHILAGYGEGTGHVFNLGHGIHQHVDPEHAGAFIKAVHAQSKQYHK.

Substrate is bound by residues 27–31 (RQAGR), aspartate 77, tyrosine 154, serine 209, and histidine 327.

It belongs to the uroporphyrinogen decarboxylase family. Homodimer.

The protein resides in the cytoplasm. The catalysed reaction is uroporphyrinogen III + 4 H(+) = coproporphyrinogen III + 4 CO2. Its pathway is porphyrin-containing compound metabolism; protoporphyrin-IX biosynthesis; coproporphyrinogen-III from 5-aminolevulinate: step 4/4. In terms of biological role, catalyzes the decarboxylation of four acetate groups of uroporphyrinogen-III to yield coproporphyrinogen-III. This Shewanella baltica (strain OS185) protein is Uroporphyrinogen decarboxylase.